Here is a 503-residue protein sequence, read N- to C-terminus: ATP synthase subunit alpha (503 aa).

Residue 169 to 176 (GDRGTGKT) coordinates ATP.

This sequence belongs to the ATPase alpha/beta chains family. As to quaternary structure, F-type ATPases have 2 components, CF(1) - the catalytic core - and CF(0) - the membrane proton channel. CF(1) has five subunits: alpha(3), beta(3), gamma(1), delta(1), epsilon(1). CF(0) has three main subunits: a(1), b(2) and c(9-12). The alpha and beta chains form an alternating ring which encloses part of the gamma chain. CF(1) is attached to CF(0) by a central stalk formed by the gamma and epsilon chains, while a peripheral stalk is formed by the delta and b chains.

It localises to the cell inner membrane. The catalysed reaction is ATP + H2O + 4 H(+)(in) = ADP + phosphate + 5 H(+)(out). Produces ATP from ADP in the presence of a proton gradient across the membrane. The alpha chain is a regulatory subunit. The sequence is that of ATP synthase subunit alpha from Leptospira interrogans serogroup Icterohaemorrhagiae serovar copenhageni (strain Fiocruz L1-130).